The sequence spans 90 residues: DNA/RNA-binding protein Alba (90 aa).

At lysine 11 the chain carries N6-acetyllysine.

Belongs to the histone-like Alba family. Acetylated. Acetylation at Lys-11 decreases DNA-binding affinity.

It is found in the cytoplasm. The protein resides in the chromosome. Its function is as follows. Binds double-stranded DNA tightly but without sequence specificity. Involved in DNA compaction. This is DNA/RNA-binding protein Alba from Picrophilus torridus (strain ATCC 700027 / DSM 9790 / JCM 10055 / NBRC 100828 / KAW 2/3).